The following is a 136-amino-acid chain: Heavy metal-associated isoprenylated plant protein 19 (136 aa).

The HMA domain occupies 13-77 (YMDVEFNVSM…LKKKTGKRVK (65 aa)). Residues Cys-24 and Cys-27 each coordinate a metal cation. Cys-133 is modified (cysteine methyl ester). Cys-133 is lipidated: S-farnesyl cysteine. Positions 134-136 (SIS) are cleaved as a propeptide — removed in mature form.

The protein belongs to the HIPP family.

Its function is as follows. Heavy-metal-binding protein. This Arabidopsis thaliana (Mouse-ear cress) protein is Heavy metal-associated isoprenylated plant protein 19.